The following is a 349-amino-acid chain: Lipoyl synthase (349 aa).

Residues C55, C60, C66, C81, C85, C88, and S292 each contribute to the [4Fe-4S] cluster site. Residues 67–281 (WESREATFLI…ADFARELGFG (215 aa)) form the Radical SAM core domain.

This sequence belongs to the radical SAM superfamily. Lipoyl synthase family. [4Fe-4S] cluster serves as cofactor.

It is found in the cytoplasm. It carries out the reaction [[Fe-S] cluster scaffold protein carrying a second [4Fe-4S](2+) cluster] + N(6)-octanoyl-L-lysyl-[protein] + 2 oxidized [2Fe-2S]-[ferredoxin] + 2 S-adenosyl-L-methionine + 4 H(+) = [[Fe-S] cluster scaffold protein] + N(6)-[(R)-dihydrolipoyl]-L-lysyl-[protein] + 4 Fe(3+) + 2 hydrogen sulfide + 2 5'-deoxyadenosine + 2 L-methionine + 2 reduced [2Fe-2S]-[ferredoxin]. It participates in protein modification; protein lipoylation via endogenous pathway; protein N(6)-(lipoyl)lysine from octanoyl-[acyl-carrier-protein]: step 2/2. Catalyzes the radical-mediated insertion of two sulfur atoms into the C-6 and C-8 positions of the octanoyl moiety bound to the lipoyl domains of lipoate-dependent enzymes, thereby converting the octanoylated domains into lipoylated derivatives. This is Lipoyl synthase from Corynebacterium diphtheriae (strain ATCC 700971 / NCTC 13129 / Biotype gravis).